Here is a 161-residue protein sequence, read N- to C-terminus: Nucleotide-binding protein PFL_4775 (161 aa).

Belongs to the YajQ family.

In terms of biological role, nucleotide-binding protein. This is Nucleotide-binding protein PFL_4775 from Pseudomonas fluorescens (strain ATCC BAA-477 / NRRL B-23932 / Pf-5).